Here is a 509-residue protein sequence, read N- to C-terminus: Maturase K (509 aa).

It belongs to the intron maturase 2 family. MatK subfamily.

The protein localises to the plastid. It is found in the chloroplast. Usually encoded in the trnK tRNA gene intron. Probably assists in splicing its own and other chloroplast group II introns. In Clematis lasiantha (Pipestem clematis), this protein is Maturase K.